Here is a 125-residue protein sequence, read N- to C-terminus: Holo-[acyl-carrier-protein] synthase (125 aa).

Positions 8 and 57 each coordinate Mg(2+).

Belongs to the P-Pant transferase superfamily. AcpS family. Mg(2+) serves as cofactor.

The protein localises to the cytoplasm. The enzyme catalyses apo-[ACP] + CoA = holo-[ACP] + adenosine 3',5'-bisphosphate + H(+). Its function is as follows. Transfers the 4'-phosphopantetheine moiety from coenzyme A to a Ser of acyl-carrier-protein. This is Holo-[acyl-carrier-protein] synthase from Nitrosospira multiformis (strain ATCC 25196 / NCIMB 11849 / C 71).